We begin with the raw amino-acid sequence, 247 residues long: Pulmonary surfactant-associated protein A (247 aa).

An N-terminal signal peptide occupies residues 1–19 (MWCSLALILILVTVSGIMC). N20 carries N-linked (GlcNAc...) asparagine glycosylation. The 73-residue stretch at 27 to 99 (GSPGIPGTPG…PGERGPPGLP (73 aa)) folds into the Collagen-like domain. Residues P29, P32, P35, P41, P53, P56, P62, P66, and P69 each carry the 4-hydroxyproline modification. The interval 32 to 101 (PGTPGSHGLP…ERGPPGLPAS (70 aa)) is disordered. Basic and acidic residues predominate over residues 41 to 50 (PGRDGRDGVK). The span at 53–64 (PGPPGPMGPPGV) shows a compositional bias: pro residues. Residues 83-92 (ERGDKGDPGE) are compositionally biased toward basic and acidic residues. Residues 131-247 (LAVGDKVFAT…LQSRLTICEF (117 aa)) enclose the C-type lectin domain. Disulfide bonds link C154/C245 and C223/C237. N206 carries an N-linked (GlcNAc...) asparagine glycan. 4 residues coordinate Ca(2+): E214, R216, N233, and D234.

The protein belongs to the SFTPA family. Oligomeric complex of 6 set of homotrimers.

The protein resides in the secreted. It localises to the extracellular space. The protein localises to the extracellular matrix. It is found in the surface film. In terms of biological role, in presence of calcium ions, it binds to surfactant phospholipids and contributes to lower the surface tension at the air-liquid interface in the alveoli of the mammalian lung and is essential for normal respiration. Enhances the expression of MYO18A/SP-R210 on alveolar macrophages. The chain is Pulmonary surfactant-associated protein A (SFTPA1) from Cavia porcellus (Guinea pig).